Reading from the N-terminus, the 483-residue chain is Glycogen synthase (483 aa).

Lys-15 serves as a coordination point for ADP-alpha-D-glucose.

It belongs to the glycosyltransferase 1 family. Bacterial/plant glycogen synthase subfamily.

The enzyme catalyses [(1-&gt;4)-alpha-D-glucosyl](n) + ADP-alpha-D-glucose = [(1-&gt;4)-alpha-D-glucosyl](n+1) + ADP + H(+). It functions in the pathway glycan biosynthesis; glycogen biosynthesis. Synthesizes alpha-1,4-glucan chains using ADP-glucose. The protein is Glycogen synthase of Desulfatibacillum aliphaticivorans.